Reading from the N-terminus, the 91-residue chain is Protein LURE 1.3 (91 aa).

The first 20 residues, 1–20 (MKLPFIFLITLLIFVSSCTS), serve as a signal peptide directing secretion. N24 is a glycosylation site (N-linked (GlcNAc...) asparagine). Cystine bridges form between C59–C76, C62–C83, and C66–C85. The tract at residues 68–88 (RRGKYIRTCSFERKLCRCSIS) is PRK6 binding.

Belongs to the DEFL family. As to quaternary structure, binds to PRK6 LRRs. In terms of tissue distribution, expressed in the pistil. Detected exclusively in the synergid cells.

Its subcellular location is the secreted. Its function is as follows. Pollen tube attractants guiding pollen tubes to the ovular micropyle. Attracts pollen tubes from both A.thaliana and A.lyrata. In Arabidopsis thaliana (Mouse-ear cress), this protein is Protein LURE 1.3.